The primary structure comprises 399 residues: Cell division protein FtsZ (399 aa).

GTP contacts are provided by residues 18–22 (GGGVN), 105–107 (GTG), Glu136, Arg140, and Asp184. Residues 311 to 399 (GFDGGQPPSK…EELDVPDFLK (89 aa)) form a disordered region. The segment covering 388 to 399 (AAEELDVPDFLK) has biased composition (acidic residues).

The protein belongs to the FtsZ family. As to quaternary structure, homodimer. Polymerizes to form a dynamic ring structure in a strictly GTP-dependent manner. Interacts directly with several other division proteins.

The protein localises to the cytoplasm. In terms of biological role, essential cell division protein that forms a contractile ring structure (Z ring) at the future cell division site. The regulation of the ring assembly controls the timing and the location of cell division. One of the functions of the FtsZ ring is to recruit other cell division proteins to the septum to produce a new cell wall between the dividing cells. Binds GTP and shows GTPase activity. The sequence is that of Cell division protein FtsZ from Streptomyces coelicolor (strain ATCC BAA-471 / A3(2) / M145).